The sequence spans 928 residues: MAKVPVLEDAFLPAQPSPQVSPEAQEECCVQLLGKGLLLYPEERVYLAAEAQPGGARGSAERGEHPELPVGVKSEMHLSNGNFSSEEEDGESHDSKTKAADLHLSQKKTITQMMKDKKKQTQLTLQWLEENYIVCEGVCLPRCILYAHYLDFCRKEKLEPACAATFGKTIRQKFPLLTTRRLGTRGHSKYHYYGIGIKESSAYYHSVYSGKGLTRFSGSKLKNEGGFTRKYSLSSKTGTLLPEFPSAQHLVYQGCISKDKVDTLIMMYKTHCQCILDNAINGNFEEIQHFLLHFWQGMPDHLLPLLENPVIIDIFCVCDSILYKVLTDVLIPATMQEMPESLLADIRNFAKNWEQWVVSSLENLPEALTDKKIPIVRRFVSSLKRQTSFLHLAQIARPALFDQHVVNSMVSDIEKVDLNSIGSQALLTISGSTDTESDIYTEHDSITVFQELKDLLKKNATVEAFIEWLDTVVEQRVIKTSKQNGRSLKKRAQDFLLKWSFFGARVMHNLTLNNASSFGSFHLIRMLLDEYILLAMETQFNNDKEQELQNLLDKYMKNSDASKAAFTASPSSCFLANRNKGSTASSDTVKNESHVETAYLPLSSSHPGGFPSALHPFPAGNTDTMPLTGQMELSQSTGHLMTPPISPAMASRGSVINQGPMAGRPPSVGPVLSAPSHCSTFPESIYPTHPQTNQDFYGTNSNYQTVFRAQPHPPSGLYPHRPEHGRCMAWSEQQLSRDFFSGSCAGSPYNSRPPSSYGPSSHSQDSHSMQFLNTGSFNFLSSTGAASCQGATLPPSSPNGYYGSSINYPESHRLGSMVNQHVSVISSVRSLPPYSDIHDPLNILDDSSRKQTSSFYADTSPSVACRTPVVASSLQTSIPSSSSQCMYGTSNQYPAQETLDSHGANSREMVSSLPPINTVFMGTAAGGT.

Disordered stretches follow at residues 1–22 (MAKV…QVSP) and 53–102 (PGGA…AADL). Basic and acidic residues predominate over residues 92 to 101 (SHDSKTKAAD). The segment at residues 124–199 (TLQWLEENYI…YHYYGIGIKE (76 aa)) is a DNA-binding region (RFX-type winged-helix).

The protein belongs to the RFX family. Interacts with RFX3.

It is found in the nucleus. In terms of biological role, transcription factor required to direct islet cell differentiation during endocrine pancreas development. Specifically required for the differentiation of 4 of the 5 islet cell types and for the production of insulin. Not required for pancreatic PP (polypeptide-producing) cells differentiation. Acts downstream of NEUROG3 and regulates the transcription factors involved in beta-cell maturation and function, thereby restricting the expression of the beta-cell differentiation and specification genes, and thus the beta-cell fate choice. Activates transcription by forming a heterodimer with RFX3 and binding to the X-box in the promoter of target genes. Involved in glucose-stimulated insulin secretion by promoting insulin and L-type calcium channel gene transcription. The polypeptide is DNA-binding protein RFX6 (RFX6) (Ailuropoda melanoleuca (Giant panda)).